The chain runs to 237 residues: Peroxisomal membrane protein 11-1 (237 aa).

Topologically, residues 1-92 (MSTLDATRAE…TLVLLGKSKN (92 aa)) are cytoplasmic. A helical transmembrane segment spans residues 93–113 (ALLSTFLFLDQFVWLGRTGIY). The Lumenal portion of the chain corresponds to 114–204 (KNKERTDRIV…VGLLQLSPKK (91 aa)). Residues 205–223 (ITPRVTGAFGFVTSLISCY) form a helical membrane-spanning segment. Over 224–237 (QQLPSRAPAIKVKA) the chain is Cytoplasmic.

The protein belongs to the peroxin-11 family. As to expression, expressed in seedlings, leaf sheaths, flag leaf, panicles and spikelets.

It is found in the peroxisome membrane. In terms of biological role, involved in peroxisomal proliferation. In Oryza sativa subsp. japonica (Rice), this protein is Peroxisomal membrane protein 11-1 (PEX11-1).